Here is a 146-residue protein sequence, read N- to C-terminus: 3-dehydroquinate dehydratase (146 aa).

Tyr-23 functions as the Proton acceptor in the catalytic mechanism. Residues Asn-74, His-80, and Asp-87 each contribute to the substrate site. His-100 (proton donor) is an active-site residue. Residues 101–102 (IS) and Arg-111 contribute to the substrate site.

The protein belongs to the type-II 3-dehydroquinase family. Homododecamer.

The enzyme catalyses 3-dehydroquinate = 3-dehydroshikimate + H2O. Its pathway is metabolic intermediate biosynthesis; chorismate biosynthesis; chorismate from D-erythrose 4-phosphate and phosphoenolpyruvate: step 3/7. In terms of biological role, catalyzes a trans-dehydration via an enolate intermediate. In Bacillus cereus (strain G9842), this protein is 3-dehydroquinate dehydratase.